The chain runs to 263 residues: L-aspartate dehydrogenase (263 aa).

Positions 120 and 186 each coordinate NAD(+). Residue H216 is part of the active site.

It belongs to the L-aspartate dehydrogenase family.

The enzyme catalyses L-aspartate + NADP(+) + H2O = oxaloacetate + NH4(+) + NADPH + H(+). It carries out the reaction L-aspartate + NAD(+) + H2O = oxaloacetate + NH4(+) + NADH + H(+). Its pathway is cofactor biosynthesis; NAD(+) biosynthesis; iminoaspartate from L-aspartate (dehydrogenase route): step 1/1. Functionally, specifically catalyzes the NAD or NADP-dependent dehydrogenation of L-aspartate to iminoaspartate. The protein is L-aspartate dehydrogenase of Acinetobacter baylyi (strain ATCC 33305 / BD413 / ADP1).